Reading from the N-terminus, the 36-residue chain is Putative DNA-binding protein inhibitor ID-2B (36 aa).

In Homo sapiens (Human), this protein is Putative DNA-binding protein inhibitor ID-2B (ID2B).